The following is a 582-amino-acid chain: Fructose-1,6-bisphosphatase class 3 (582 aa).

It belongs to the FBPase class 3 family. The cofactor is Mn(2+).

The catalysed reaction is beta-D-fructose 1,6-bisphosphate + H2O = beta-D-fructose 6-phosphate + phosphate. The protein operates within carbohydrate biosynthesis; gluconeogenesis. This Saccharophagus degradans (strain 2-40 / ATCC 43961 / DSM 17024) protein is Fructose-1,6-bisphosphatase class 3.